The following is a 292-amino-acid chain: 4-diphosphocytidyl-2-C-methyl-D-erythritol kinase (292 aa).

The active site involves K20. ATP is bound at residue 103 to 113; sequence PMGGGIGGGSS. D145 is a catalytic residue.

This sequence belongs to the GHMP kinase family. IspE subfamily.

It catalyses the reaction 4-CDP-2-C-methyl-D-erythritol + ATP = 4-CDP-2-C-methyl-D-erythritol 2-phosphate + ADP + H(+). The protein operates within isoprenoid biosynthesis; isopentenyl diphosphate biosynthesis via DXP pathway; isopentenyl diphosphate from 1-deoxy-D-xylulose 5-phosphate: step 3/6. Catalyzes the phosphorylation of the position 2 hydroxy group of 4-diphosphocytidyl-2C-methyl-D-erythritol. This is 4-diphosphocytidyl-2-C-methyl-D-erythritol kinase from Cupriavidus taiwanensis (strain DSM 17343 / BCRC 17206 / CCUG 44338 / CIP 107171 / LMG 19424 / R1) (Ralstonia taiwanensis (strain LMG 19424)).